Reading from the N-terminus, the 319-residue chain is tRNA uridine(34) hydroxylase (319 aa).

Residues 127–221 (KQEDTVIIDA…YGKDPEVQGE (95 aa)) enclose the Rhodanese domain. C181 serves as the catalytic Cysteine persulfide intermediate.

This sequence belongs to the TrhO family.

It carries out the reaction uridine(34) in tRNA + AH2 + O2 = 5-hydroxyuridine(34) in tRNA + A + H2O. Functionally, catalyzes oxygen-dependent 5-hydroxyuridine (ho5U) modification at position 34 in tRNAs. The sequence is that of tRNA uridine(34) hydroxylase from Bacillus thuringiensis (strain Al Hakam).